The sequence spans 180 residues: Acireductone dioxygenase (180 aa).

Histidine 97, histidine 99, glutamate 103, and histidine 141 together coordinate Fe(2+). Ni(2+) is bound by residues histidine 97, histidine 99, glutamate 103, and histidine 141.

Belongs to the acireductone dioxygenase (ARD) family. In terms of assembly, monomer. The cofactor is Fe(2+). It depends on Ni(2+) as a cofactor.

It carries out the reaction 1,2-dihydroxy-5-(methylsulfanyl)pent-1-en-3-one + O2 = 3-(methylsulfanyl)propanoate + CO + formate + 2 H(+). The catalysed reaction is 1,2-dihydroxy-5-(methylsulfanyl)pent-1-en-3-one + O2 = 4-methylsulfanyl-2-oxobutanoate + formate + 2 H(+). It functions in the pathway amino-acid biosynthesis; L-methionine biosynthesis via salvage pathway; L-methionine from S-methyl-5-thio-alpha-D-ribose 1-phosphate: step 5/6. In terms of biological role, catalyzes 2 different reactions between oxygen and the acireductone 1,2-dihydroxy-3-keto-5-methylthiopentene (DHK-MTPene) depending upon the metal bound in the active site. Fe-containing acireductone dioxygenase (Fe-ARD) produces formate and 2-keto-4-methylthiobutyrate (KMTB), the alpha-ketoacid precursor of methionine in the methionine recycle pathway. Ni-containing acireductone dioxygenase (Ni-ARD) produces methylthiopropionate, carbon monoxide and formate, and does not lie on the methionine recycle pathway. The protein is Acireductone dioxygenase of Cronobacter sakazakii (Enterobacter sakazakii).